Here is a 57-residue protein sequence, read N- to C-terminus: MAGSFHRVACGDCENEQVVFGKASSVVSCAVCGTTLATPTGGEAEFHGEIVETVEAR.

Zn(2+) contacts are provided by Cys10, Cys13, Cys29, and Cys32. Residues 10 to 32 (CGDCENEQVVFGKASSVVSCAVC) form a C4-type zinc finger.

The protein belongs to the eukaryotic ribosomal protein eS27 family. In terms of assembly, part of the 30S ribosomal subunit. Zn(2+) serves as cofactor.

This is Small ribosomal subunit protein eS27 from Halorubrum lacusprofundi (strain ATCC 49239 / DSM 5036 / JCM 8891 / ACAM 34).